The following is a 246-amino-acid chain: Transmembrane and ubiquitin-like domain-containing protein 1 (246 aa).

The required to release iHOPS from membranes stretch occupies residues 2 to 30 (TLIEGVGDEVTVLFSVLACLLVLALAWVS). Residues 11–31 (VTVLFSVLACLLVLALAWVST) form a helical membrane-spanning segment. The interval 34 to 101 (AEGGDPLPQP…TPPAPDSPQE (68 aa)) is disordered. Residues 40–50 (LPQPSGTPTPS) are compositionally biased toward pro residues. Thr-71 carries the phosphothreonine modification. The residue at position 73 (Ser-73) is a Phosphoserine. At Thr-92 the chain carries Phosphothreonine. 2 positions are modified to phosphoserine: Ser-98 and Ser-127. A Ubiquitin-like domain is found at 103–176 (LVLRLKFLND…LHCHVSTRVG (74 aa)). Helical transmembrane passes span 195 to 215 (IGSL…YCQI) and 221 to 241 (FPLT…LLAF).

Interacts with EEF1A1, GRIA2, GRIP1, CAMLG, TUBG1. Interacts with NPM1 and CDKN2A; TMUB1 can enhance interaction between NPM1 and CDKN2A and is proposed to bridge the proteins; proposed to be mediated by iHOPS. Interacts with ERLIN2 and AMFR; TMUB1 promotes the interaction of ERLIN2 with AMFR. In terms of processing, processed by regulated intramembrane proteolysis (RIP)in the N-terminus to release iHOPS from membranes. As to expression, ubiquitously expressed with highest levels in mammary and thyroid glands, bone marrow and spleen; limited expression in cardiac, pancreatic and ovarian tissues.

Its subcellular location is the membrane. The protein localises to the postsynaptic cell membrane. It is found in the recycling endosome. The protein resides in the cytoplasm. It localises to the nucleus. Its subcellular location is the nucleolus. The protein localises to the cytoskeleton. It is found in the microtubule organizing center. The protein resides in the centrosome. Its function is as follows. Involved in sterol-regulated ubiquitination and degradation of HMG-CoA reductase HMGCR. Involved in positive regulation of AMPA-selective glutamate receptor GRIA2 recycling to the cell surface. Acts as a negative regulator of hepatocyte growth during regeneration. May contribute to the regulation of translation during cell-cycle progression. May contribute to the regulation of cell proliferation. May be involved in centrosome assembly. Modulates stabilization and nucleolar localization of tumor suppressor CDKN2A and enhances association between CDKN2A and NPM1. The protein is Transmembrane and ubiquitin-like domain-containing protein 1 (TMUB1) of Homo sapiens (Human).